Here is a 931-residue protein sequence, read N- to C-terminus: Dymeclin (931 aa).

Disordered regions lie at residues 1–53, 599–618, and 839–931; these read MGVA…SSTT, SPSKINTNNSNNNVKDNTNN, and DANN…EKTN. Gly2 carries N-myristoyl glycine lipidation. Low complexity-rich tracts occupy residues 27–49 and 601–618; these read NNNKNNNNNNNNNNNNNNNNNNN and SKINTNNSNNNVKDNTNN. The segment covering 839-858 has biased composition (polar residues); sequence DANNFTPKKQLSSDQLHSPP. Composition is skewed to low complexity over residues 859-876 and 889-901; these read TNTTTTTTTTTNSTSSNT and QLQQQNNLRNQEQ. The segment covering 919-931 has biased composition (polar residues); it reads TTGVELSSTEKTN.

This sequence belongs to the dymeclin family.

This Dictyostelium discoideum (Social amoeba) protein is Dymeclin (dym).